A 474-amino-acid polypeptide reads, in one-letter code: Glutamate--tRNA ligase (474 aa).

Residues 9-19 (PSPTGFLHVGG) carry the 'HIGH' region motif. A 'KMSKS' region motif is present at residues 240 to 244 (KLSKR). K243 contacts ATP.

It belongs to the class-I aminoacyl-tRNA synthetase family. Glutamate--tRNA ligase type 1 subfamily. In terms of assembly, monomer.

The protein localises to the cytoplasm. It carries out the reaction tRNA(Glu) + L-glutamate + ATP = L-glutamyl-tRNA(Glu) + AMP + diphosphate. Catalyzes the attachment of glutamate to tRNA(Glu) in a two-step reaction: glutamate is first activated by ATP to form Glu-AMP and then transferred to the acceptor end of tRNA(Glu). The sequence is that of Glutamate--tRNA ligase from Photobacterium profundum (strain SS9).